Consider the following 427-residue polypeptide: Probable glucuronosyltransferase Os03g0107900 (427 aa).

At 1–33 the chain is on the cytoplasmic side; the sequence is MAMRGDPKQRRASASAPHGGAAHHVADKLRRHS. A helical; Signal-anchor for type II membrane protein transmembrane segment spans residues 34-54; the sequence is TFLLLLLLLWFALSLYLFLSA. The Lumenal segment spans residues 55-427; sequence TPPPPRPAFL…QRRHVESWKR (373 aa). N-linked (GlcNAc...) asparagine glycosylation is found at Asn-136, Asn-168, Asn-264, and Asn-374.

It belongs to the glycosyltransferase 47 family.

It is found in the golgi apparatus membrane. Functionally, involved in the synthesis of glucuronoxylan hemicellulose in secondary cell walls. In Oryza sativa subsp. japonica (Rice), this protein is Probable glucuronosyltransferase Os03g0107900.